The primary structure comprises 299 residues: 4-diphosphocytidyl-2-C-methyl-D-erythritol kinase (299 aa).

K10 is an active-site residue. ATP is bound at residue 96–106; it reads PVAGGMAGGSA. D138 is a catalytic residue.

The protein belongs to the GHMP kinase family. IspE subfamily.

The enzyme catalyses 4-CDP-2-C-methyl-D-erythritol + ATP = 4-CDP-2-C-methyl-D-erythritol 2-phosphate + ADP + H(+). It functions in the pathway isoprenoid biosynthesis; isopentenyl diphosphate biosynthesis via DXP pathway; isopentenyl diphosphate from 1-deoxy-D-xylulose 5-phosphate: step 3/6. Functionally, catalyzes the phosphorylation of the position 2 hydroxy group of 4-diphosphocytidyl-2C-methyl-D-erythritol. This Streptomyces coelicolor (strain ATCC BAA-471 / A3(2) / M145) protein is 4-diphosphocytidyl-2-C-methyl-D-erythritol kinase.